We begin with the raw amino-acid sequence, 213 residues long: UPF0301 protein Aave_0907 (213 aa).

The tract at residues methionine 93 to alanine 120 is disordered.

Belongs to the UPF0301 (AlgH) family.

In Paracidovorax citrulli (strain AAC00-1) (Acidovorax citrulli), this protein is UPF0301 protein Aave_0907.